We begin with the raw amino-acid sequence, 338 residues long: Holliday junction branch migration complex subunit RuvB (338 aa).

A large ATPase domain (RuvB-L) region spans residues 4–184 (ADRLMSAAAV…FGIVQRLEFY (181 aa)). ATP contacts are provided by residues Ile23, Arg24, Gly65, Lys68, Thr69, Thr70, 131–133 (EDY), Arg174, Tyr184, and Arg221. Thr69 serves as a coordination point for Mg(2+). Residues 185-255 (QTGDLQHIVS…VAVSALNMLN (71 aa)) are small ATPAse domain (RuvB-S). The tract at residues 258–338 (TEGFDFMDRK…GLEEHGGDPE (81 aa)) is head domain (RuvB-H). Residues Arg294, Arg313, and Arg318 each contribute to the DNA site.

The protein belongs to the RuvB family. Homohexamer. Forms an RuvA(8)-RuvB(12)-Holliday junction (HJ) complex. HJ DNA is sandwiched between 2 RuvA tetramers; dsDNA enters through RuvA and exits via RuvB. An RuvB hexamer assembles on each DNA strand where it exits the tetramer. Each RuvB hexamer is contacted by two RuvA subunits (via domain III) on 2 adjacent RuvB subunits; this complex drives branch migration. In the full resolvosome a probable DNA-RuvA(4)-RuvB(12)-RuvC(2) complex forms which resolves the HJ.

It is found in the cytoplasm. It carries out the reaction ATP + H2O = ADP + phosphate + H(+). The RuvA-RuvB-RuvC complex processes Holliday junction (HJ) DNA during genetic recombination and DNA repair, while the RuvA-RuvB complex plays an important role in the rescue of blocked DNA replication forks via replication fork reversal (RFR). RuvA specifically binds to HJ cruciform DNA, conferring on it an open structure. The RuvB hexamer acts as an ATP-dependent pump, pulling dsDNA into and through the RuvAB complex. RuvB forms 2 homohexamers on either side of HJ DNA bound by 1 or 2 RuvA tetramers; 4 subunits per hexamer contact DNA at a time. Coordinated motions by a converter formed by DNA-disengaged RuvB subunits stimulates ATP hydrolysis and nucleotide exchange. Immobilization of the converter enables RuvB to convert the ATP-contained energy into a lever motion, pulling 2 nucleotides of DNA out of the RuvA tetramer per ATP hydrolyzed, thus driving DNA branch migration. The RuvB motors rotate together with the DNA substrate, which together with the progressing nucleotide cycle form the mechanistic basis for DNA recombination by continuous HJ branch migration. Branch migration allows RuvC to scan DNA until it finds its consensus sequence, where it cleaves and resolves cruciform DNA. This chain is Holliday junction branch migration complex subunit RuvB, found in Sodalis glossinidius (strain morsitans).